The primary structure comprises 341 residues: MTQQRPIAVLGGGSFGTAVANLLAENGHRVRQWMRDPEQAEAIRVNRENPRYLKGIKIHPAVEPVTDLLATLNDSDLCFVALPSSALRSVLAPHAELLRGKLLVSLTKGIEAQTFKLMSEILQDIAPQARIGVLSGPNLAREVAEHALTATVVASEDEELCQRVQAALHGRTFRVYASADRFGVELGGALKNVYAIIAGMAVALGMGENTKSMLITRALAEMTRFAVSQGANPMTFLGLAGVGDLIVTCSSPKSRNYQVGFALGQGLSLEEAVTRLGEVAEGVNTLKVLKVKAQELGVYMPLVAGLHAILFEGRTLNQVIELLMRGEPKTDVDFISTSGFN.

Residues Ser14, Phe15, Arg35, and Lys108 each coordinate NADPH. Residues Lys108 and Gly136 each coordinate sn-glycerol 3-phosphate. Ala140 is a binding site for NADPH. The sn-glycerol 3-phosphate site is built by Lys191, Asp244, Ser254, Arg255, and Asn256. Lys191 acts as the Proton acceptor in catalysis. NADPH is bound at residue Arg255. The NADPH site is built by Val279 and Glu281.

This sequence belongs to the NAD-dependent glycerol-3-phosphate dehydrogenase family.

Its subcellular location is the cytoplasm. The catalysed reaction is sn-glycerol 3-phosphate + NAD(+) = dihydroxyacetone phosphate + NADH + H(+). It carries out the reaction sn-glycerol 3-phosphate + NADP(+) = dihydroxyacetone phosphate + NADPH + H(+). The protein operates within membrane lipid metabolism; glycerophospholipid metabolism. Catalyzes the reduction of the glycolytic intermediate dihydroxyacetone phosphate (DHAP) to sn-glycerol 3-phosphate (G3P), the key precursor for phospholipid synthesis. This is Glycerol-3-phosphate dehydrogenase [NAD(P)+] from Pseudomonas fluorescens (strain ATCC BAA-477 / NRRL B-23932 / Pf-5).